A 295-amino-acid chain; its full sequence is Glutamate 5-kinase (295 aa).

Lys9 lines the ATP pocket. The substrate site is built by Ser49, Asp136, and Asn148. ATP contacts are provided by residues 168–169 (TD) and 210–216 (TGGMLTK).

This sequence belongs to the glutamate 5-kinase family.

The protein localises to the cytoplasm. The enzyme catalyses L-glutamate + ATP = L-glutamyl 5-phosphate + ADP. It functions in the pathway amino-acid biosynthesis; L-proline biosynthesis; L-glutamate 5-semialdehyde from L-glutamate: step 1/2. In terms of biological role, catalyzes the transfer of a phosphate group to glutamate to form L-glutamate 5-phosphate. The sequence is that of Glutamate 5-kinase from Neisseria gonorrhoeae (strain NCCP11945).